The following is a 213-amino-acid chain: Small ribosomal subunit protein uS3c (213 aa).

The 71-residue stretch at 39 to 109 (IRKYLNAKLA…KFRITITYLQ (71 aa)) folds into the KH type-2 domain.

The protein belongs to the universal ribosomal protein uS3 family. In terms of assembly, part of the 30S ribosomal subunit.

It is found in the plastid. The protein localises to the chloroplast. This Mesostigma viride (Green alga) protein is Small ribosomal subunit protein uS3c (rps3).